The primary structure comprises 926 residues: Mating-type protein A-alpha Y3 (926 aa).

The segment at residues 147–206 (YKKPRPKFHSEYTPLLELYFHFNAYPTFADRRMLAEKTGMQTRQITVWFQNHRRRAKGPL) is a DNA-binding region (homeobox). Disordered regions lie at residues 238-281 (SHLR…KVGK), 308-374 (QQAP…TSSA), 424-452 (GKGKPSQNLTSTPATFSTVPPRRTSSRLN), and 625-734 (RARK…MNES). Composition is skewed to basic and acidic residues over residues 267 to 281 (KKPDGDKEALRKVGK) and 326 to 338 (NAQDVEMRDATKS). Positions 428-441 (PSQNLTSTPATFST) are enriched in polar residues. Basic and acidic residues predominate over residues 632–660 (KQAEKEARKEEKRARKEAKQAKKDRKEQR). Low complexity-rich tracts occupy residues 669–687 (STLDSSRASSVTSDASATS) and 699–724 (SSASSVASARTPSLSSTSSRRSSGTS).

The protein resides in the nucleus. Functionally, specifies A-alpha-3 mating-type. May regulate the expression of genes specific to the homokaryotic cell type. The sequence is that of Mating-type protein A-alpha Y3 from Schizophyllum commune (Split gill fungus).